The chain runs to 378 residues: Peptide chain release factor RF2 (378 aa).

Q253 bears the N5-methylglutamine mark.

It belongs to the prokaryotic/mitochondrial release factor family. Interacts with the ribosome. Interacts with ribosomal protein L11. Recruited to stalled E.coli ribosomes by E.coli ArfA.

It localises to the cytoplasm. Its function is as follows. Peptide chain release factor 2 directs the termination of translation in response to the peptide chain termination codons UGA and UAA. In endogenous ribosomes interacts with P-site tRNA and 23S rRNA. In the presence of truncated mRNA in the 70S ribosome, ArfA and RF2 interact such that the GGQ peptide hydrolysis motif of RF2 rises into the peptidyl-transferase center and releases the ribosome. Recruited to stalled E.coli 70S ribosomes by E.coli ArfA, but cannot be functionally accomodated in the peptidyl-transferase center. Note T.thermophilus probably does not encode arfA. The polypeptide is Peptide chain release factor RF2 (prfB) (Thermus thermophilus (strain ATCC 27634 / DSM 579 / HB8)).